The chain runs to 274 residues: Large ribosomal subunit protein uL2cz/uL2cy (274 aa).

Disordered stretches follow at residues 1–23 and 224–274; these read MAIH…SKVK and NPVD…RRSK.

It belongs to the universal ribosomal protein uL2 family. As to quaternary structure, part of the 50S ribosomal subunit.

It is found in the plastid. The protein localises to the chloroplast. The protein is Large ribosomal subunit protein uL2cz/uL2cy (rpl2-A) of Lactuca sativa (Garden lettuce).